Here is a 568-residue protein sequence, read N- to C-terminus: Keratin, type I cytoskeletal 10 (568 aa).

A compositionally biased stretch (low complexity) spans 1–15 (MSVRYSSSKQYSSSR). Residues 1 to 31 (MSVRYSSSKQYSSSRSGGGGGGGGGSSFRIS) are disordered. Residues 1–135 (MSVRYSSSKQ…GGDGGLLSGN (135 aa)) form a head region. 6 positions are modified to phosphoserine: Ser14, Ser16, Ser36, Ser47, Ser50, and Ser160. Positions 16–26 (SGGGGGGGGGS) are enriched in gly residues. Residues 136–171 (EKVTMQNLNDRLASYLDKVRALEESNYELEGKIKEW) are coil 1A. Residues 136–450 (EKVTMQNLND…SLLEGEGSSG (315 aa)) form the IF rod domain. The tract at residues 172 to 192 (YEKHGNSSQRAPRDYSKYYQT) is linker 1. Positions 193-284 (IEDLKNQILN…KNHEEEMRDL (92 aa)) are coil 1B. The segment at 285–307 (QNVSTGDVNVEMNAAPGVDLTEL) is linker 12. Residues 308–446 (LNNMRNQYEQ…QTYRSLLEGE (139 aa)) form a coil 2 region. The tail stretch occupies residues 447–568 (GSSGGGGYGG…GESSSKGPRY (122 aa)). The segment covering 485-546 (GGGSSGGGGH…GGGYGGGSSS (62 aa)) has biased composition (gly residues). The interval 485 to 568 (GGGSSGGGGH…GESSSKGPRY (84 aa)) is disordered. A compositionally biased stretch (low complexity) spans 547-568 (SGGHKSSSSGSVGESSSKGPRY).

The protein belongs to the intermediate filament family. In terms of assembly, heterotetramer of two type I and two type II keratins. Heterodimer with KRT1. Two heterodimers of KRT1 and KRT10 form a heterotetramer. The KRT10 subunit in the heterotetramer is probably disulfide-linked. Expressed in skin.

The protein localises to the secreted. The protein resides in the extracellular space. It is found in the cell surface. Its subcellular location is the cytoplasm. Functionally, plays a role in the establishment of the epidermal barrier on plantar skin. Involved in the maintenance of cell layer development and keratin filament bundles in suprabasal cells of the epithelium. The sequence is that of Keratin, type I cytoskeletal 10 from Canis lupus familiaris (Dog).